Here is a 300-residue protein sequence, read N- to C-terminus: Probable protein phosphatase 2C 2 (300 aa).

The PPM-type phosphatase domain occupies 23-298 (IFAASEMQGW…DNMTTILVYL (276 aa)). 4 residues coordinate Mn(2+): aspartate 57, glycine 58, aspartate 237, and aspartate 289.

It belongs to the PP2C family. It depends on Mg(2+) as a cofactor. The cofactor is Mn(2+).

It is found in the membrane. The catalysed reaction is O-phospho-L-seryl-[protein] + H2O = L-seryl-[protein] + phosphate. It catalyses the reaction O-phospho-L-threonyl-[protein] + H2O = L-threonyl-[protein] + phosphate. Its function is as follows. Enzyme with a broad specificity. This chain is Probable protein phosphatase 2C 2, found in Paramecium tetraurelia.